The following is a 190-amino-acid chain: Protein PLANT CADMIUM RESISTANCE 10 (190 aa).

Transmembrane regions (helical) follow at residues 78–98 (LLGSGTFAGPCLTHCISWALV) and 108–125 (GALLGLPGCFVSCYACGY).

This sequence belongs to the cornifelin family.

It localises to the membrane. In terms of biological role, may be involved in cadmium resistance. In Arabidopsis thaliana (Mouse-ear cress), this protein is Protein PLANT CADMIUM RESISTANCE 10 (PCR10).